The sequence spans 401 residues: 8-amino-7-oxononanoate synthase (401 aa).

Residue Arg-19 participates in substrate binding. 106–107 is a binding site for pyridoxal 5'-phosphate; sequence GY. His-131 provides a ligand contact to substrate. Positions 176, 204, and 233 each coordinate pyridoxal 5'-phosphate. At Lys-236 the chain carries N6-(pyridoxal phosphate)lysine. Residue Thr-350 coordinates substrate.

Belongs to the class-II pyridoxal-phosphate-dependent aminotransferase family. BioF subfamily. In terms of assembly, homodimer. It depends on pyridoxal 5'-phosphate as a cofactor.

It catalyses the reaction 6-carboxyhexanoyl-[ACP] + L-alanine + H(+) = (8S)-8-amino-7-oxononanoate + holo-[ACP] + CO2. The protein operates within cofactor biosynthesis; biotin biosynthesis. In terms of biological role, catalyzes the decarboxylative condensation of pimeloyl-[acyl-carrier protein] and L-alanine to produce 8-amino-7-oxononanoate (AON), [acyl-carrier protein], and carbon dioxide. This Pseudomonas aeruginosa (strain ATCC 15692 / DSM 22644 / CIP 104116 / JCM 14847 / LMG 12228 / 1C / PRS 101 / PAO1) protein is 8-amino-7-oxononanoate synthase.